The following is a 1167-amino-acid chain: DNA-directed RNA polymerase subunit beta (1167 aa).

The segment at 1–27 is disordered; it reads MAVSPANQATAATTSAESRSEATGIPG. Low complexity predominate over residues 9-23; the sequence is ATAATTSAESRSEAT.

The protein belongs to the RNA polymerase beta chain family. The RNAP catalytic core consists of 2 alpha, 1 beta, 1 beta' and 1 omega subunit. When a sigma factor is associated with the core the holoenzyme is formed, which can initiate transcription.

It catalyses the reaction RNA(n) + a ribonucleoside 5'-triphosphate = RNA(n+1) + diphosphate. Functionally, DNA-dependent RNA polymerase catalyzes the transcription of DNA into RNA using the four ribonucleoside triphosphates as substrates. This chain is DNA-directed RNA polymerase subunit beta, found in Amycolatopsis mediterranei (strain S699) (Nocardia mediterranei).